The primary structure comprises 955 residues: Leucine--tRNA ligase (955 aa).

The 'HIGH' region motif lies at 51–61 (PYLNGVLHAGH). The 'KMSKS' region signature appears at 647–651 (KLSKS). K650 is a binding site for ATP.

Belongs to the class-I aminoacyl-tRNA synthetase family.

Its subcellular location is the cytoplasm. The catalysed reaction is tRNA(Leu) + L-leucine + ATP = L-leucyl-tRNA(Leu) + AMP + diphosphate. The chain is Leucine--tRNA ligase from Methanococcus maripaludis (strain C7 / ATCC BAA-1331).